Here is a 110-residue protein sequence, read N- to C-terminus: Integration host factor subunit beta (110 aa).

Belongs to the bacterial histone-like protein family. In terms of assembly, heterodimer of an alpha and a beta chain.

Functionally, this protein is one of the two subunits of integration host factor, a specific DNA-binding protein that functions in genetic recombination as well as in transcriptional and translational control. The chain is Integration host factor subunit beta from Parvibaculum lavamentivorans (strain DS-1 / DSM 13023 / NCIMB 13966).